Here is a 326-residue protein sequence, read N- to C-terminus: Apoptosis facilitator Bcl-2-like protein 14 (326 aa).

S44 is modified (phosphoserine). The interval 100-147 is disordered; it reads AEKEEDSQSSPPEICAQAQRSGVPQARPRSPKWPRSRSSMDQRLEHKA. Residues 137–147 are compositionally biased toward basic and acidic residues; it reads SSMDQRLEHKA. Positions 211–225 match the BH3 motif; the sequence is IVELLKYSGEQLERE. The short motif at 307–314 is the BH2 element; sequence WIQQHGGW.

The protein belongs to the Bcl-2 family. Phosphorylated by MELK, leading to inhibit its pro-apoptotic function.

The protein resides in the cytoplasm. In terms of biological role, plays a role in apoptosis. The protein is Apoptosis facilitator Bcl-2-like protein 14 (BCL2L14) of Bos taurus (Bovine).